A 383-amino-acid polypeptide reads, in one-letter code: ATP phosphoribosyltransferase regulatory subunit (383 aa).

This sequence belongs to the class-II aminoacyl-tRNA synthetase family. HisZ subfamily. Heteromultimer composed of HisG and HisZ subunits.

The protein resides in the cytoplasm. It participates in amino-acid biosynthesis; L-histidine biosynthesis; L-histidine from 5-phospho-alpha-D-ribose 1-diphosphate: step 1/9. Required for the first step of histidine biosynthesis. May allow the feedback regulation of ATP phosphoribosyltransferase activity by histidine. The sequence is that of ATP phosphoribosyltransferase regulatory subunit from Cupriavidus metallidurans (strain ATCC 43123 / DSM 2839 / NBRC 102507 / CH34) (Ralstonia metallidurans).